Consider the following 191-residue polypeptide: MYPSAPPDAYNKFSAGAPPTAPPPPAAYHQQQQQHGANMDTSRPGGGLRKWSTGLFHCMDDPGNCLITCLCPCVTFGQVADIVDKGTCPCIASGLVYGLICASTGMGCLYSCLYRSKLRAEYDLDEGECPDILVHCCCEHLALCQEYRELKNRGFDLGIGWEANMDRQRRGVAGGGAVMGAPPAIPLGMIR.

Positions 13-44 (FSAGAPPTAPPPPAAYHQQQQQHGANMDTSRP) are disordered. Low complexity predominate over residues 27–37 (AYHQQQQQHGA). A helical membrane pass occupies residues 91–113 (IASGLVYGLICASTGMGCLYSCL).

It belongs to the cornifelin family. Expressed in roots, coleoptiles, stalks and silks. Detected in leaves, apical meristems, immature ears and pericarps. Highest expression in coleoptiles and silks.

The protein resides in the membrane. Its function is as follows. Acts as a negative regulator of cell number. The polypeptide is Cell number regulator 1 (CNR1) (Zea mays (Maize)).